Reading from the N-terminus, the 91-residue chain is RNA-binding protein Hfq (91 aa).

The 60-residue stretch at Asp-9–Val-68 folds into the Sm domain. Residues Val-68–Glu-91 form a disordered region.

It belongs to the Hfq family. In terms of assembly, homohexamer.

RNA chaperone that binds small regulatory RNA (sRNAs) and mRNAs to facilitate mRNA translational regulation in response to envelope stress, environmental stress and changes in metabolite concentrations. Also binds with high specificity to tRNAs. The sequence is that of RNA-binding protein Hfq from Haemophilus influenzae (strain 86-028NP).